The primary structure comprises 277 residues: Phosphatidylserine decarboxylase proenzyme (277 aa).

Residues aspartate 88, histidine 144, and serine 242 each act as charge relay system; for autoendoproteolytic cleavage activity in the active site. Residue serine 242 is the Schiff-base intermediate with substrate; via pyruvic acid; for decarboxylase activity of the active site. Serine 242 is subject to Pyruvic acid (Ser); by autocatalysis.

It belongs to the phosphatidylserine decarboxylase family. PSD-B subfamily. Prokaryotic type I sub-subfamily. As to quaternary structure, heterodimer of a large membrane-associated beta subunit and a small pyruvoyl-containing alpha subunit. The cofactor is pyruvate. Is synthesized initially as an inactive proenzyme. Formation of the active enzyme involves a self-maturation process in which the active site pyruvoyl group is generated from an internal serine residue via an autocatalytic post-translational modification. Two non-identical subunits are generated from the proenzyme in this reaction, and the pyruvate is formed at the N-terminus of the alpha chain, which is derived from the carboxyl end of the proenzyme. The autoendoproteolytic cleavage occurs by a canonical serine protease mechanism, in which the side chain hydroxyl group of the serine supplies its oxygen atom to form the C-terminus of the beta chain, while the remainder of the serine residue undergoes an oxidative deamination to produce ammonia and the pyruvoyl prosthetic group on the alpha chain. During this reaction, the Ser that is part of the protease active site of the proenzyme becomes the pyruvoyl prosthetic group, which constitutes an essential element of the active site of the mature decarboxylase.

The protein localises to the cell membrane. The enzyme catalyses a 1,2-diacyl-sn-glycero-3-phospho-L-serine + H(+) = a 1,2-diacyl-sn-glycero-3-phosphoethanolamine + CO2. It functions in the pathway phospholipid metabolism; phosphatidylethanolamine biosynthesis; phosphatidylethanolamine from CDP-diacylglycerol: step 2/2. In terms of biological role, catalyzes the formation of phosphatidylethanolamine (PtdEtn) from phosphatidylserine (PtdSer). This chain is Phosphatidylserine decarboxylase proenzyme, found in Psychrobacter arcticus (strain DSM 17307 / VKM B-2377 / 273-4).